The primary structure comprises 174 residues: Small ribosomal subunit protein uS5 (174 aa).

The S5 DRBM domain occupies 19–82 (LREKMIAVNR…EQARRGMFKV (64 aa)).

This sequence belongs to the universal ribosomal protein uS5 family. As to quaternary structure, part of the 30S ribosomal subunit. Contacts proteins S4 and S8.

In terms of biological role, with S4 and S12 plays an important role in translational accuracy. Located at the back of the 30S subunit body where it stabilizes the conformation of the head with respect to the body. The sequence is that of Small ribosomal subunit protein uS5 from Bordetella bronchiseptica (strain ATCC BAA-588 / NCTC 13252 / RB50) (Alcaligenes bronchisepticus).